Reading from the N-terminus, the 514-residue chain is Putative thymidine phosphorylase (514 aa).

This sequence belongs to the thymidine/pyrimidine-nucleoside phosphorylase family. Type 2 subfamily.

The catalysed reaction is thymidine + phosphate = 2-deoxy-alpha-D-ribose 1-phosphate + thymine. This Sphingopyxis alaskensis (strain DSM 13593 / LMG 18877 / RB2256) (Sphingomonas alaskensis) protein is Putative thymidine phosphorylase.